The chain runs to 219 residues: Flagellin A (219 aa).

A propeptide spanning residues 1–12 (MKVKEFMNNKKG) is cleaved from the precursor. Residues asparagine 38 and asparagine 175 are each glycosylated (N-linked (GlcNAc...) asparagine).

Belongs to the archaeal flagellin family. N-linked glycans consist of the 779 Da trisaccharide beta-ManNAc(Thr)-(1-4)-beta-GlcNAc3NAcA-(1-3)-beta-GlcNAc.

It is found in the archaeal flagellum. Functionally, flagellin is the subunit protein which polymerizes to form the filaments of archaeal flagella. This chain is Flagellin A (flaA), found in Methanococcus voltae.